The primary structure comprises 270 residues: 3-phenylpropionate-dihydrodiol/cinnamic acid-dihydrodiol dehydrogenase (270 aa).

Residue 10-34 (FITGGGSGLGLALVERFIEEGAQVA) participates in NAD(+) binding. Ser143 is a binding site for substrate. Tyr156 acts as the Proton acceptor in catalysis.

It belongs to the short-chain dehydrogenases/reductases (SDR) family.

The catalysed reaction is 3-(cis-5,6-dihydroxycyclohexa-1,3-dien-1-yl)propanoate + NAD(+) = 3-(2,3-dihydroxyphenyl)propanoate + NADH + H(+). It catalyses the reaction (2E)-3-(cis-5,6-dihydroxycyclohexa-1,3-dien-1-yl)prop-2-enoate + NAD(+) = (2E)-3-(2,3-dihydroxyphenyl)prop-2-enoate + NADH + H(+). It functions in the pathway aromatic compound metabolism; 3-phenylpropanoate degradation. Converts 3-phenylpropionate-dihydrodiol (PP-dihydrodiol) and cinnamic acid-dihydrodiol (CI-dihydrodiol) into 3-(2,3-dihydroxylphenyl)propanoic acid (DHPP) and 2,3-dihydroxicinnamic acid (DHCI), respectively. This chain is 3-phenylpropionate-dihydrodiol/cinnamic acid-dihydrodiol dehydrogenase, found in Shigella sonnei (strain Ss046).